Here is a 125-residue protein sequence, read N- to C-terminus: Interferon-induced transmembrane protein 1 (125 aa).

Residues 1–36 (MHKEEHEVAVLGPPPSTILPRSTVINIHSETSVPDH) are Cytoplasmic-facing. S16 is modified (phosphoserine). An intramembrane region (helical) is located at residues 37–57 (VVWSLFNTLFLNWCCLGFIAF). S-palmitoyl cysteine attachment occurs at residues C50, C51, and C84. Over 58 to 86 (AYSVKSRDRKMVGDVTGAQAYASTAKCLN) the chain is Cytoplasmic. The tract at residues 84–125 (CLNIWALILGILMTIGFILLLVFGSVTVYHIMLQIIQEKRGY) is interaction with CAV1. A helical transmembrane segment spans residues 87–107 (IWALILGILMTIGFILLLVFG). At 108-125 (SVTVYHIMLQIIQEKRGY) the chain is on the extracellular side.

The protein belongs to the CD225/Dispanin family. Interacts with CD81. Part of a complex composed of CD19, CR2/CD21, CD81 and IFITM1/CD225 in the membrane of mature B-cells. Interacts with CAV1; this interaction enhances the ability of CAV1 in inhibiting ERK activation. Post-translationally, palmitoylation on membrane-proximal cysteines controls clustering in membrane compartments and antiviral activity. In terms of tissue distribution, bone (at protein level). Levels greatly elevated in colon cancer, cervical cancer, esophageal cancer and ovarian cancer. Expressed in glioma cell lines.

The protein localises to the cell membrane. It is found in the lysosome membrane. In terms of biological role, IFN-induced antiviral protein which inhibits the entry of viruses to the host cell cytoplasm, permitting endocytosis, but preventing subsequent viral fusion and release of viral contents into the cytosol. Active against multiple viruses, including influenza A virus, SARS coronaviruses (SARS-CoV and SARS-CoV-2), Marburg virus (MARV), Ebola virus (EBOV), Dengue virus (DNV), West Nile virus (WNV), human immunodeficiency virus type 1 (HIV-1) and hepatitis C virus (HCV). Can inhibit: influenza virus hemagglutinin protein-mediated viral entry, MARV and EBOV GP1,2-mediated viral entry and SARS-CoV and SARS-CoV-2 S protein-mediated viral entry. Also implicated in cell adhesion and control of cell growth and migration. Inhibits SARS-CoV-2 S protein-mediated syncytia formation. Plays a key role in the antiproliferative action of IFN-gamma either by inhibiting the ERK activation or by arresting cell growth in G1 phase in a p53-dependent manner. Acts as a positive regulator of osteoblast differentiation. In hepatocytes, IFITM proteins act in a coordinated manner to restrict HCV infection by targeting the endocytosed HCV virion for lysosomal degradation. IFITM2 and IFITM3 display anti-HCV activity that may complement the anti-HCV activity of IFITM1 by inhibiting the late stages of HCV entry, possibly in a coordinated manner by trapping the virion in the endosomal pathway and targeting it for degradation at the lysosome. This chain is Interferon-induced transmembrane protein 1, found in Homo sapiens (Human).